We begin with the raw amino-acid sequence, 177 residues long: ATP synthase subunit delta (177 aa).

Belongs to the ATPase delta chain family. F-type ATPases have 2 components, F(1) - the catalytic core - and F(0) - the membrane proton channel. F(1) has five subunits: alpha(3), beta(3), gamma(1), delta(1), epsilon(1). F(0) has three main subunits: a(1), b(2) and c(10-14). The alpha and beta chains form an alternating ring which encloses part of the gamma chain. F(1) is attached to F(0) by a central stalk formed by the gamma and epsilon chains, while a peripheral stalk is formed by the delta and b chains.

Its subcellular location is the cell inner membrane. F(1)F(0) ATP synthase produces ATP from ADP in the presence of a proton or sodium gradient. F-type ATPases consist of two structural domains, F(1) containing the extramembraneous catalytic core and F(0) containing the membrane proton channel, linked together by a central stalk and a peripheral stalk. During catalysis, ATP synthesis in the catalytic domain of F(1) is coupled via a rotary mechanism of the central stalk subunits to proton translocation. Its function is as follows. This protein is part of the stalk that links CF(0) to CF(1). It either transmits conformational changes from CF(0) to CF(1) or is implicated in proton conduction. In Erwinia tasmaniensis (strain DSM 17950 / CFBP 7177 / CIP 109463 / NCPPB 4357 / Et1/99), this protein is ATP synthase subunit delta.